The following is an 89-amino-acid chain: HssA/B-like protein 14 (89 aa).

It belongs to the hssA/B family.

In Dictyostelium discoideum (Social amoeba), this protein is HssA/B-like protein 14 (hssl14).